A 215-amino-acid polypeptide reads, in one-letter code: Cytochrome b6 (215 aa).

Residues 32-52 (IFYCLGGITLTCFLVQVATGF) traverse the membrane as a helical segment. Cys-35 contributes to the heme c binding site. Heme b is bound by residues His-86 and His-100. A run of 3 helical transmembrane segments spans residues 90–110 (ASMM…TGGF), 116–136 (LTWV…VTGY), and 186–206 (LHTF…FLMI). Residues His-187 and His-202 each coordinate heme b.

It belongs to the cytochrome b family. PetB subfamily. As to quaternary structure, the 4 large subunits of the cytochrome b6-f complex are cytochrome b6, subunit IV (17 kDa polypeptide, PetD), cytochrome f and the Rieske protein, while the 4 small subunits are PetG, PetL, PetM and PetN. The complex functions as a dimer. Heme b is required as a cofactor. Requires heme c as cofactor.

The protein resides in the plastid. The protein localises to the chloroplast thylakoid membrane. In terms of biological role, component of the cytochrome b6-f complex, which mediates electron transfer between photosystem II (PSII) and photosystem I (PSI), cyclic electron flow around PSI, and state transitions. The chain is Cytochrome b6 from Welwitschia mirabilis (Tree tumbo).